Reading from the N-terminus, the 299-residue chain is Probable lipid kinase YegS (299 aa).

The region spanning 2–133 (ANFPASLLIL…IDMARVNDKT (132 aa)) is the DAGKc domain. Residues Thr40, 66 to 72 (GDGTINE), and Thr95 contribute to the ATP site. Mg(2+) is bound by residues Leu215, Asp218, and Leu220. The active-site Proton acceptor is the Glu271.

Belongs to the diacylglycerol/lipid kinase family. YegS lipid kinase subfamily. The cofactor is Mg(2+). It depends on Ca(2+) as a cofactor.

The protein resides in the cytoplasm. In terms of biological role, probably phosphorylates lipids; the in vivo substrate is unknown. This is Probable lipid kinase YegS from Salmonella newport (strain SL254).